The following is a 387-amino-acid chain: Putative glutamate--cysteine ligase 2 (387 aa).

The protein belongs to the glutamate--cysteine ligase type 2 family. YbdK subfamily.

The enzyme catalyses L-cysteine + L-glutamate + ATP = gamma-L-glutamyl-L-cysteine + ADP + phosphate + H(+). ATP-dependent carboxylate-amine ligase which exhibits weak glutamate--cysteine ligase activity. The chain is Putative glutamate--cysteine ligase 2 from Trichormus variabilis (strain ATCC 29413 / PCC 7937) (Anabaena variabilis).